The primary structure comprises 478 residues: Sugar transporter ERD6-like 15 (478 aa).

12 consecutive transmembrane segments (helical) span residues 31 to 51 (FVLA…IIGY), 67 to 87 (IADY…GALI), 106 to 126 (ILFV…LLDL), 129 to 149 (LLQG…ITEI), 161 to 181 (FAQL…TIVA), 185 to 205 (LAIL…FIPE), 267 to 287 (AFSL…GLNG), 305 to 325 (FGFI…TVLV), 333 to 353 (LLLV…ISFF), 366 to 386 (VLAL…MGSI), 406 to 426 (MCNL…SYLL), and 432 to 452 (GTFL…AKLV).

The protein belongs to the major facilitator superfamily. Sugar transporter (TC 2.A.1.1) family.

Its subcellular location is the membrane. Sugar transporter. This chain is Sugar transporter ERD6-like 15, found in Arabidopsis thaliana (Mouse-ear cress).